Consider the following 396-residue polypeptide: Ornithine aminotransferase 2 (396 aa).

At lysine 255 the chain carries N6-(pyridoxal phosphate)lysine.

Belongs to the class-III pyridoxal-phosphate-dependent aminotransferase family. OAT subfamily. Pyridoxal 5'-phosphate is required as a cofactor.

Its subcellular location is the cytoplasm. It catalyses the reaction a 2-oxocarboxylate + L-ornithine = L-glutamate 5-semialdehyde + an L-alpha-amino acid. It participates in amino-acid biosynthesis; L-proline biosynthesis; L-glutamate 5-semialdehyde from L-ornithine: step 1/1. Its function is as follows. Catalyzes the interconversion of ornithine to glutamate semialdehyde. This Staphylococcus saprophyticus subsp. saprophyticus (strain ATCC 15305 / DSM 20229 / NCIMB 8711 / NCTC 7292 / S-41) protein is Ornithine aminotransferase 2.